The sequence spans 185 residues: Ribosome-recycling factor (185 aa).

Belongs to the RRF family.

It localises to the cytoplasm. Responsible for the release of ribosomes from messenger RNA at the termination of protein biosynthesis. May increase the efficiency of translation by recycling ribosomes from one round of translation to another. This is Ribosome-recycling factor from Mycobacterium bovis (strain BCG / Pasteur 1173P2).